Here is a 288-residue protein sequence, read N- to C-terminus: Small ribosomal subunit biogenesis GTPase RsgA (288 aa).

The CP-type G domain occupies 61–218 (TNKLIRPPVS…IVDTPGFSSL (158 aa)). Residues 110–113 (NKID) and 161–169 (GPSGVGKST) each bind GTP. 4 residues coordinate Zn(2+): C242, C247, H249, and C255.

Belongs to the TRAFAC class YlqF/YawG GTPase family. RsgA subfamily. In terms of assembly, monomer. Associates with 30S ribosomal subunit, binds 16S rRNA. Zn(2+) is required as a cofactor.

The protein resides in the cytoplasm. Functionally, one of several proteins that assist in the late maturation steps of the functional core of the 30S ribosomal subunit. Helps release RbfA from mature subunits. May play a role in the assembly of ribosomal proteins into the subunit. Circularly permuted GTPase that catalyzes slow GTP hydrolysis, GTPase activity is stimulated by the 30S ribosomal subunit. This Clostridium acetobutylicum (strain ATCC 824 / DSM 792 / JCM 1419 / IAM 19013 / LMG 5710 / NBRC 13948 / NRRL B-527 / VKM B-1787 / 2291 / W) protein is Small ribosomal subunit biogenesis GTPase RsgA.